The primary structure comprises 252 residues: 2-succinyl-6-hydroxy-2,4-cyclohexadiene-1-carboxylate synthase (252 aa).

It belongs to the AB hydrolase superfamily. MenH family. In terms of assembly, monomer.

The enzyme catalyses 5-enolpyruvoyl-6-hydroxy-2-succinyl-cyclohex-3-ene-1-carboxylate = (1R,6R)-6-hydroxy-2-succinyl-cyclohexa-2,4-diene-1-carboxylate + pyruvate. Its pathway is quinol/quinone metabolism; 1,4-dihydroxy-2-naphthoate biosynthesis; 1,4-dihydroxy-2-naphthoate from chorismate: step 3/7. The protein operates within quinol/quinone metabolism; menaquinone biosynthesis. In terms of biological role, catalyzes a proton abstraction reaction that results in 2,5-elimination of pyruvate from 2-succinyl-5-enolpyruvyl-6-hydroxy-3-cyclohexene-1-carboxylate (SEPHCHC) and the formation of 2-succinyl-6-hydroxy-2,4-cyclohexadiene-1-carboxylate (SHCHC). This is 2-succinyl-6-hydroxy-2,4-cyclohexadiene-1-carboxylate synthase from Escherichia coli (strain SMS-3-5 / SECEC).